We begin with the raw amino-acid sequence, 322 residues long: Breast cancer metastasis-suppressor 1-like protein (322 aa).

Residues 1-16 (MPVHSREKKESNHNDM) show a composition bias toward basic and acidic residues. Residues 1-56 (MPVHSREKKESNHNDMEVDYPENEGTSSEEDDSDSSSGSEEGDSSEMDDEDCERRR) are disordered. Acidic residues predominate over residues 17–51 (EVDYPENEGTSSEEDDSDSSSGSEEGDSSEMDDED). 2 coiled-coil regions span residues 50–82 (EDCE…KERL) and 147–178 (EKLL…ITSE).

Belongs to the BRMS1 family.

It is found in the nucleus. Functionally, involved in the histone deacetylase (HDAC1)-dependent transcriptional repression activity. This is Breast cancer metastasis-suppressor 1-like protein (brms1l) from Xenopus tropicalis (Western clawed frog).